A 511-amino-acid chain; its full sequence is Ribose import ATP-binding protein RbsA (511 aa).

2 ABC transporter domains span residues 7-242 and 256-500; these read LQIS…VGRE and CSTT…SGTQ. An ATP-binding site is contributed by 39–46; the sequence is GENGAGKS.

This sequence belongs to the ABC transporter superfamily. Ribose importer (TC 3.A.1.2.1) family. As to quaternary structure, the complex is composed of an ATP-binding protein (RbsA), two transmembrane proteins (RbsC) and a solute-binding protein (RbsB).

The protein resides in the cell inner membrane. The catalysed reaction is D-ribose(out) + ATP + H2O = D-ribose(in) + ADP + phosphate + H(+). Functionally, part of the ABC transporter complex RbsABC involved in ribose import. Responsible for energy coupling to the transport system. The chain is Ribose import ATP-binding protein RbsA from Ruegeria sp. (strain TM1040) (Silicibacter sp.).